The primary structure comprises 30 residues: Cyclotide cter-G (30 aa).

Residues 1–30 (GLPCGESCVFIPCITTVVGCSCKNKVCYNN) constitute a cross-link (cyclopeptide (Gly-Asn)). Disulfide bonds link Cys4–Cys20, Cys8–Cys22, and Cys13–Cys27.

In terms of processing, contains 3 disulfide bonds. Post-translationally, this is a cyclic peptide.

In terms of biological role, probably participates in a plant defense mechanism. This chain is Cyclotide cter-G, found in Clitoria ternatea (Butterfly pea).